The chain runs to 328 residues: Tryptophan--tRNA ligase (328 aa).

ATP contacts are provided by residues 8 to 10 and 16 to 17; these read RPT and GH. The 'HIGH' region motif lies at 9-17; that stretch reads PTGKLHIGH. Residue Asp136 coordinates L-tryptophan. ATP contacts are provided by residues 148–150, Leu186, and 193–197; these read GED and KMSKS. A 'KMSKS' region motif is present at residues 193–197; it reads KMSKS.

The protein belongs to the class-I aminoacyl-tRNA synthetase family. In terms of assembly, homodimer.

Its subcellular location is the cytoplasm. It catalyses the reaction tRNA(Trp) + L-tryptophan + ATP = L-tryptophyl-tRNA(Trp) + AMP + diphosphate + H(+). Catalyzes the attachment of tryptophan to tRNA(Trp). In Thermotoga maritima (strain ATCC 43589 / DSM 3109 / JCM 10099 / NBRC 100826 / MSB8), this protein is Tryptophan--tRNA ligase.